Here is a 414-residue protein sequence, read N- to C-terminus: Protein MAK11 (414 aa).

S2 bears the N-acetylserine mark. WD repeat units follow at residues 50–78 (AHSL…RIYD), 90–135 (SHQG…MVWR), 147–177 (GHTA…RLWN), 189–221 (LRKY…LIYE), 238–267 (LMHI…HFYP), and 298–330 (GHTN…VVWD). A phosphoserine mark is found at S376 and S380. At T382 the chain carries Phosphothreonine.

Associates with 60S pre-ribosomal particles.

It localises to the nucleus. The protein resides in the nucleolus. It is found in the nucleus membrane. In terms of biological role, essential for cell growth. Plays a role in assembly of 60S pre-ribosomal particles in the nucleolus. Also required for replication of the M1 double-stranded RNA of the L-A virus. This latter function may reflect an enhanced requirement for free 60S ribosomal particles for the translation of viral mRNAs which lack poly-A tails. The protein is Protein MAK11 (MAK11) of Saccharomyces cerevisiae (strain ATCC 204508 / S288c) (Baker's yeast).